Here is a 705-residue protein sequence, read N- to C-terminus: Elongation factor G (705 aa).

One can recognise a tr-type G domain in the interval 8-290 (AYYRNIGISA…AVIEYLPAPT (283 aa)). Residues 17 to 24 (AHIDAGKT), 88 to 92 (DTPGH), and 142 to 145 (NKMD) contribute to the GTP site.

The protein belongs to the TRAFAC class translation factor GTPase superfamily. Classic translation factor GTPase family. EF-G/EF-2 subfamily.

It localises to the cytoplasm. In terms of biological role, catalyzes the GTP-dependent ribosomal translocation step during translation elongation. During this step, the ribosome changes from the pre-translocational (PRE) to the post-translocational (POST) state as the newly formed A-site-bound peptidyl-tRNA and P-site-bound deacylated tRNA move to the P and E sites, respectively. Catalyzes the coordinated movement of the two tRNA molecules, the mRNA and conformational changes in the ribosome. In Baumannia cicadellinicola subsp. Homalodisca coagulata, this protein is Elongation factor G.